The primary structure comprises 4568 residues: Dynein beta chain, flagellar outer arm (4568 aa).

Positions Met-1 to Ala-1880 are stem. 5 coiled-coil regions span residues Phe-277–Asp-293, Glu-1158–Leu-1175, Lys-1372–Asp-1400, Glu-1614–Phe-1650, and Gln-1778–Leu-1825. The disordered stretch occupies residues Gly-1144–Ala-1166. The segment covering Glu-1150–Ala-1166 has biased composition (basic and acidic residues). AAA stretches follow at residues Tyr-1881–Val-2102, Glu-2164–Lys-2385, Gln-2493–Gly-2738, and Glu-2841–Tyr-3090. ATP is bound by residues Gly-1919 to Thr-1926, Gly-2202 to Thr-2209, and Gly-2530 to Ser-2537. Residues Leu-2831 to Val-2848 adopt a coiled-coil conformation. Gly-2879–Gln-2886 provides a ligand contact to ATP. 3 coiled-coil regions span residues Lys-3106–Ile-3162, Lys-3339–Ser-3425, and His-3648–Glu-3728. Positions Lys-3106–Ser-3425 are stalk. 2 AAA regions span residues Leu-3481–Glu-3711 and Met-3937–Asn-4172.

The protein belongs to the dynein heavy chain family. In terms of assembly, consists of at least 3 heavy chains (alpha, beta and gamma), 2 intermediate chains and 8 light chains.

It localises to the cell projection. The protein resides in the cilium. It is found in the flagellum. The protein localises to the cytoplasm. Its subcellular location is the cytoskeleton. It localises to the flagellum axoneme. In terms of biological role, force generating protein of eukaryotic cilia and flagella. Produces force towards the minus ends of microtubules. Dynein has ATPase activity; the force-producing power stroke is thought to occur on release of ADP. The protein is Dynein beta chain, flagellar outer arm (ODA4) of Chlamydomonas reinhardtii (Chlamydomonas smithii).